The primary structure comprises 412 residues: 43 kDa receptor-associated protein of the synapse (412 aa).

The N-myristoyl glycine moiety is linked to residue Gly-2. TPR repeat units follow at residues 6–39 (TKQQ…SADP), 83–116 (TEGY…QGTT), 123–156 (GQVS…AHNN), 163–196 (CRVC…VNDY), 206–239 (AMSQ…ALQH), 246–279 (ALCL…MTEI), and 286–319 (IQVL…AEGL). Position 196 is a phosphotyrosine (Tyr-196). The RING-type zinc-finger motif lies at 363 to 403 (CGMCGESIGEKNNQLQALPCSHFFHLKCLQTNGTRGCPNCR).

The protein belongs to the RAPsyn family. As to expression, expressed in muscle fibers and in neurons.

The protein localises to the cell membrane. It localises to the postsynaptic cell membrane. The protein resides in the cytoplasm. It is found in the cytoskeleton. In terms of biological role, postsynaptic protein required for clustering of nicotinic acetylcholine receptors (nAChRs) at the neuromuscular junction. It may link the receptor to the underlying postsynaptic cytoskeleton, possibly by direct association with actin or spectrin. The protein is 43 kDa receptor-associated protein of the synapse (RAPSN) of Gallus gallus (Chicken).